A 165-amino-acid chain; its full sequence is Nucleotide-binding protein Cagg_1607 (165 aa).

Belongs to the YajQ family.

In terms of biological role, nucleotide-binding protein. This chain is Nucleotide-binding protein Cagg_1607, found in Chloroflexus aggregans (strain MD-66 / DSM 9485).